Reading from the N-terminus, the 859-residue chain is MGRKLDLSGLTDDETEHVLQVVQRDFNLRKKEEERLSELKQKLDEEGSKCSILSKHQQFVEHCCMRCCSPFTFLVNTKRQCGDCKFNVCKSCCSYQKHEKAWVCCVCQQARLLRAQSLEWFYNNVKSRFKRFGSAKVLKNLYRKHRLESGACFDILGGSLFESNLENEGSISGSDSTFYRQSEGHSVMDTLAVALRVAEEAIEEAISKAEAYGDSLDKQNEASYLRDHKEELTEELATTILQKIIRKQKSKSEQQVEEEPGWPHPQSCSTKVADEGTSASPGGYRAPAALWRSQSAFSITGEEALKTPPVEAPSRQPRDQGQHPRAESALPSWKSVDRLDETNLAPVLQSPDGNWVALKDGAPPPTRLLAKPKSGTFQALEVASSVASAYDEMGSDSEEDFDWSEALSKLCPRSRALPRNPQPQPTQAQSSDQGPIAASPSSALSPNPEAMCSDSETSSAGSSREVGHQARLSWLQRKAPRNPAAEKMRLHGELDVNFNPQLASRETSDSSEPEEAPHTTDRRARRWRRARLGSEEPSKEPSSPSAQLRDLDTHQVSDDLSETDISNEARDPQTLTDTTEEKRRNRLYELAMKMSEKETSSGEDQESEPKTESENQKESLSSEDNSQSVQEELKKKFSAVSLCNISTEVLKVINATEELIAGSTGPWESPQVPPDRQKGMFPRGTDQVRLDEQLTSLEENVYLAAGTVYGLETQLTELEDAARCIHSGTDETHLADLEDQVATAAAQVHHAELQISDIESRISALTIAGLNIAPCVRFTRRRDQKQRTQVQTIDTSRQQRRKLPAPPVKAEKIETSSVTTIKTFNHNFILQGSSTNRTKERKGTTKDLMEPALESAVMY.

The RabBD domain maps to 4–124; it reads KLDLSGLTDD…AQSLEWFYNN (121 aa). The segment at 63 to 105 adopts an FYVE-type zinc-finger fold; the sequence is CCMRCCSPFTFLVNTKRQCGDCKFNVCKSCCSYQKHEKAWVCC. The tract at residues 143–560 is myosin-binding; the sequence is RKHRLESGAC…LDTHQVSDDL (418 aa). The segment at 193 to 209 is PKA-binding; sequence VALRVAEEAIEEAISKA. A negative regulation of PKA-binding region spans residues 232–248; that stretch reads LTEELATTILQKIIRKQ. Positions 251–285 are disordered; that stretch reads KSEQQVEEEPGWPHPQSCSTKVADEGTSASPGGYR. Phosphoserine is present on S298. Disordered regions lie at residues 302–374, 386–629, and 783–812; these read EEAL…KPKS, VASA…SQSV, and DQKQRTQVQTIDTSRQQRRKLPAPPVKAEK. A compositionally biased stretch (basic and acidic residues) spans 316–326; sequence QPRDQGQHPRA. S350 carries the post-translational modification Phosphoserine. Over residues 393–403 the composition is skewed to acidic residues; it reads MGSDSEEDFDW. Residues 435–450 are compositionally biased toward low complexity; sequence PIAASPSSALSPNPEA. Composition is skewed to basic and acidic residues over residues 484–494 and 607–617; these read AAEKMRLHGEL and SEPKTESENQK. The tract at residues 495–856 is actin-binding; sequence DVNFNPQLAS…DLMEPALESA (362 aa). Composition is skewed to polar residues over residues 618–629 and 787–796; these read ESLSSEDNSQSV and RTQVQTIDTS.

In terms of assembly, binds MYO5A, MYO7A and F-actin. Binds RAB27A that has been activated by GTP-binding via its N-terminus. Interacts with PRKAR2A. Interacts with components of the exocyst complex, including EXOC3 and EXOC4. Detected in brain, skin, heart, adrenal medulla, pancreas, intestine, liver, kidney, muscle and testis.

Its subcellular location is the cytoplasm. It localises to the perinuclear region. The protein localises to the cytoplasmic vesicle. It is found in the secretory vesicle. In terms of biological role, rab effector protein involved in melanosome transport. Serves as link between melanosome-bound RAB27A and the motor proteins MYO5A and MYO7A. May link RAB27A-containing vesicles to actin filaments. Functions as a protein kinase A-anchoring protein (AKAP). May act as a scaffolding protein that links PKA to components of the exocytosis machinery, thus facilitating exocytosis, including insulin release. The protein is Rab effector MyRIP (MYRIP) of Homo sapiens (Human).